The primary structure comprises 115 residues: Holo-[acyl-carrier-protein] synthase (115 aa).

2 residues coordinate Mg(2+): aspartate 6 and glutamate 51.

This sequence belongs to the P-Pant transferase superfamily. AcpS family. Mg(2+) is required as a cofactor.

The protein localises to the cytoplasm. The enzyme catalyses apo-[ACP] + CoA = holo-[ACP] + adenosine 3',5'-bisphosphate + H(+). Its function is as follows. Transfers the 4'-phosphopantetheine moiety from coenzyme A to a Ser of acyl-carrier-protein. This is Holo-[acyl-carrier-protein] synthase from Campylobacter jejuni subsp. jejuni serotype O:23/36 (strain 81-176).